A 176-amino-acid chain; its full sequence is NAD(P)H-quinone oxidoreductase subunit 6, chloroplastic (176 aa).

Helical transmembrane passes span I10–T30, P32–P52, A61–M81, I107–T127, and F152–A172.

It belongs to the complex I subunit 6 family. As to quaternary structure, NDH is composed of at least 16 different subunits, 5 of which are encoded in the nucleus.

It localises to the plastid. Its subcellular location is the chloroplast thylakoid membrane. The enzyme catalyses a plastoquinone + NADH + (n+1) H(+)(in) = a plastoquinol + NAD(+) + n H(+)(out). The catalysed reaction is a plastoquinone + NADPH + (n+1) H(+)(in) = a plastoquinol + NADP(+) + n H(+)(out). Functionally, NDH shuttles electrons from NAD(P)H:plastoquinone, via FMN and iron-sulfur (Fe-S) centers, to quinones in the photosynthetic chain and possibly in a chloroplast respiratory chain. The immediate electron acceptor for the enzyme in this species is believed to be plastoquinone. Couples the redox reaction to proton translocation, and thus conserves the redox energy in a proton gradient. The chain is NAD(P)H-quinone oxidoreductase subunit 6, chloroplastic (ndhG) from Calycanthus floridus var. glaucus (Eastern sweetshrub).